The following is a 26-amino-acid chain: Turripeptide OL57 (26 aa).

Post-translationally, contains 2 disulfide bonds. As to expression, expressed by the venom duct.

It localises to the secreted. Its function is as follows. Acts as a neurotoxin by inhibiting an ion channel. This Iotyrris olangoensis (Sea snail) protein is Turripeptide OL57.